We begin with the raw amino-acid sequence, 260 residues long: Indole-3-glycerol phosphate synthase (260 aa).

The protein belongs to the TrpC family.

It catalyses the reaction 1-(2-carboxyphenylamino)-1-deoxy-D-ribulose 5-phosphate + H(+) = (1S,2R)-1-C-(indol-3-yl)glycerol 3-phosphate + CO2 + H2O. Its pathway is amino-acid biosynthesis; L-tryptophan biosynthesis; L-tryptophan from chorismate: step 4/5. The polypeptide is Indole-3-glycerol phosphate synthase (Koribacter versatilis (strain Ellin345)).